We begin with the raw amino-acid sequence, 222 residues long: MRRGAIGIGTLIVFIAMVLVAAVAAGVLISTSGYLQQRAMSVGLETTRDVSSGLRIISIWGYAPKNTTGNTTIQSNITKLAIYIAPNAGSEPINLNQTRIILTVKSTMVIFTFGGEDTVADWTNGAVNVFNETIWENINGTKFGVGVVVDSDKSMLSNKASPGMNSGDLAVLLINTKLAFNKYGGIPPNTKVVGKILPPHGAGTVIDLITPATYSSEGIELQ.

Residues 1–4 (MRRG) constitute a propeptide that is removed on maturation.

This sequence belongs to the archaeal flagellin family.

The protein localises to the archaeal flagellum. In terms of biological role, flagellin is the subunit protein which polymerizes to form the filaments of archaeal flagella. The polypeptide is Flagellin B5 (flaB5) (Pyrococcus abyssi (strain GE5 / Orsay)).